Reading from the N-terminus, the 185-residue chain is Transcription termination/antitermination protein NusG (185 aa).

A KOW domain is found at 134-164 (VGKRVRIVDGAFSGFEAPITEINGDKLTLTV).

This sequence belongs to the NusG family.

Participates in transcription elongation, termination and antitermination. The chain is Transcription termination/antitermination protein NusG from Lactococcus lactis subsp. lactis (strain IL1403) (Streptococcus lactis).